The chain runs to 281 residues: Proteasome subunit beta (281 aa).

The propeptide at 1-53 is removed in mature form; by autocatalysis; the sequence is MEANTRSTGRLPAAFLTPGSSSFMDFLSDQSPEMLPGNRSLPPLQGAVEAPHG. Residue Thr-54 is the Nucleophile of the active site.

It belongs to the peptidase T1B family. The 20S proteasome core is composed of 14 alpha and 14 beta subunits that assemble into four stacked heptameric rings, resulting in a barrel-shaped structure. The two inner rings, each composed of seven catalytic beta subunits, are sandwiched by two outer rings, each composed of seven alpha subunits. The catalytic chamber with the active sites is on the inside of the barrel. Has a gated structure, the ends of the cylinder being occluded by the N-termini of the alpha-subunits. Is capped by the proteasome-associated ATPase, ARC.

It localises to the cytoplasm. It carries out the reaction Cleavage of peptide bonds with very broad specificity.. Its pathway is protein degradation; proteasomal Pup-dependent pathway. Its activity is regulated as follows. The formation of the proteasomal ATPase ARC-20S proteasome complex, likely via the docking of the C-termini of ARC into the intersubunit pockets in the alpha-rings, may trigger opening of the gate for substrate entry. Interconversion between the open-gate and close-gate conformations leads to a dynamic regulation of the 20S proteasome proteolysis activity. Functionally, component of the proteasome core, a large protease complex with broad specificity involved in protein degradation. This Streptomyces griseus subsp. griseus (strain JCM 4626 / CBS 651.72 / NBRC 13350 / KCC S-0626 / ISP 5235) protein is Proteasome subunit beta.